Here is a 101-residue protein sequence, read N- to C-terminus: Small ribosomal subunit protein uS14 (101 aa).

The protein belongs to the universal ribosomal protein uS14 family. As to quaternary structure, part of the 30S ribosomal subunit. Contacts proteins S3 and S10.

Functionally, binds 16S rRNA, required for the assembly of 30S particles and may also be responsible for determining the conformation of the 16S rRNA at the A site. The chain is Small ribosomal subunit protein uS14 from Paraburkholderia phytofirmans (strain DSM 17436 / LMG 22146 / PsJN) (Burkholderia phytofirmans).